The following is a 39-amino-acid chain: Omega-theraphotoxin-Bs1b (39 aa).

Disulfide bonds link Cys4/Cys25, Cys8/Cys31, and Cys17/Cys36.

It belongs to the neurotoxin 12 (Hwtx-2) family. 06 (TXP1) subfamily. Expressed by the venom gland.

The protein resides in the secreted. Functionally, inhibits voltage-gated calcium channels (Cav) in rat cerebellar granule cells. Has insecticidal activity. In Brachypelma smithi (Mexican red knee tarantula), this protein is Omega-theraphotoxin-Bs1b.